We begin with the raw amino-acid sequence, 255 residues long: Serine/threonine-protein phosphatase PP1 (255 aa).

Residues Asp-2, His-4, Asp-30, and Asn-62 each contribute to the Mn(2+) site. His-63 serves as the catalytic Proton donor. Positions 111 and 186 each coordinate Mn(2+).

It belongs to the PPP phosphatase family. PP-1 subfamily. Mn(2+) serves as cofactor.

The catalysed reaction is O-phospho-L-seryl-[protein] + H2O = L-seryl-[protein] + phosphate. It catalyses the reaction O-phospho-L-threonyl-[protein] + H2O = L-threonyl-[protein] + phosphate. The polypeptide is Serine/threonine-protein phosphatase PP1 (Brassica napus (Rape)).